The primary structure comprises 229 residues: Large ribosomal subunit protein uL1 (229 aa).

It belongs to the universal ribosomal protein uL1 family. As to quaternary structure, part of the 50S ribosomal subunit.

Binds directly to 23S rRNA. The L1 stalk is quite mobile in the ribosome, and is involved in E site tRNA release. Its function is as follows. Protein L1 is also a translational repressor protein, it controls the translation of the L11 operon by binding to its mRNA. The protein is Large ribosomal subunit protein uL1 of Clostridium botulinum (strain Alaska E43 / Type E3).